The primary structure comprises 121 residues: Flagellar protein FliT (121 aa).

Positions 1 to 50 are required for homodimerization; that stretch reads MNHAPHLYFAWQQLVDKSQLMLRLATEEQWDELIASEMAYVNAVQEIAHL. The tract at residues 60 to 98 is fliD binding; it reads MQEQLRPMLRLILDNESKVKQLLQIRMDELAKLVGQSSV.

This sequence belongs to the FliT family. As to quaternary structure, homodimer. Interacts with FliD and FlhC.

It localises to the cytoplasm. It is found in the cytosol. Its function is as follows. Dual-function protein that regulates the transcription of class 2 flagellar operons and that also acts as an export chaperone for the filament-capping protein FliD. As a transcriptional regulator, acts as an anti-FlhDC factor; it directly binds FlhC, thus inhibiting the binding of the FlhC/FlhD complex to class 2 promoters, resulting in decreased expression of class 2 flagellar operons. As a chaperone, effects FliD transition to the membrane by preventing its premature polymerization, and by directing it to the export apparatus. This Shigella sonnei (strain Ss046) protein is Flagellar protein FliT.